The primary structure comprises 245 residues: Orotidine 5'-phosphate decarboxylase (245 aa).

Residues Asp22, Lys44, 71–80 (DLKFHDIPNT), Thr131, Arg192, Gln201, Gly221, and Arg222 contribute to the substrate site. The active-site Proton donor is the Lys73.

This sequence belongs to the OMP decarboxylase family. Type 1 subfamily. Homodimer.

It carries out the reaction orotidine 5'-phosphate + H(+) = UMP + CO2. It participates in pyrimidine metabolism; UMP biosynthesis via de novo pathway; UMP from orotate: step 2/2. Its function is as follows. Catalyzes the decarboxylation of orotidine 5'-monophosphate (OMP) to uridine 5'-monophosphate (UMP). This is Orotidine 5'-phosphate decarboxylase from Yersinia pseudotuberculosis serotype O:1b (strain IP 31758).